The primary structure comprises 20 residues: L-amino-acid oxidase L1 (20 aa).

It belongs to the flavin monoamine oxidase family. FIG1 subfamily. In terms of assembly, monomer. This is in contrast with most of its orthologs, that are non-covalently linked homodimers. The cofactor is FAD. N-glycosylated. Expressed by the venom gland.

The protein localises to the secreted. It catalyses the reaction an L-alpha-amino acid + O2 + H2O = a 2-oxocarboxylate + H2O2 + NH4(+). The enzyme catalyses L-leucine + O2 + H2O = 4-methyl-2-oxopentanoate + H2O2 + NH4(+). The catalysed reaction is L-phenylalanine + O2 + H2O = 3-phenylpyruvate + H2O2 + NH4(+). It carries out the reaction L-tryptophan + O2 + H2O = indole-3-pyruvate + H2O2 + NH4(+). It catalyses the reaction L-methionine + O2 + H2O = 4-methylsulfanyl-2-oxobutanoate + H2O2 + NH4(+). The enzyme catalyses L-isoleucine + O2 + H2O = (S)-3-methyl-2-oxopentanoate + H2O2 + NH4(+). The catalysed reaction is L-tyrosine + O2 + H2O = 3-(4-hydroxyphenyl)pyruvate + H2O2 + NH4(+). Catalyzes an oxidative deamination of predominantly hydrophobic and aromatic L-amino acids, thus producing hydrogen peroxide that may contribute to the diverse toxic effects of this enzyme. Is active on L-Met, L-Ile, L-Leu, L-Phe, L-Trp, and L-Tyr. Exhibits diverse biological activities, such as hemorrhage, hemolysis, edema, apoptosis of vascular endothelial cells or tumor cell lines, antibacterial and antiparasitic activities, as well as regulation of platelet aggregation. Its effect on platelets is controversial, since it either induces aggregation or inhibits agonist-induced aggregation. These different effects are probably due to different experimental conditions. The protein is L-amino-acid oxidase L1 of Daboia russelii (Russel's viper).